A 533-amino-acid chain; its full sequence is WD repeat-containing protein PAC11 (533 aa).

Basic and acidic residues predominate over residues 1 to 19 (MERLKQLEEKRRQLKELRE). Positions 1-36 (MERLKQLEEKRRQLKELRERRKQASLFPGSETMGHH) are disordered. WD repeat units follow at residues 380 to 422 (FDEV…YLSL) and 432 to 475 (NHST…AIIG).

As to quaternary structure, interacts with NUM1, when DYN1 is present.

It localises to the cytoplasm. The protein localises to the cytoskeleton. Functionally, required for viability in the absence of the kinesin-related CIN8 mitotic motor. May be a dynein intermediate chain. The sequence is that of WD repeat-containing protein PAC11 (PAC11) from Saccharomyces cerevisiae (strain ATCC 204508 / S288c) (Baker's yeast).